A 312-amino-acid chain; its full sequence is Methionyl-tRNA formyltransferase (312 aa).

109 to 112 (SLLP) serves as a coordination point for (6S)-5,6,7,8-tetrahydrofolate.

Belongs to the Fmt family.

The enzyme catalyses L-methionyl-tRNA(fMet) + (6R)-10-formyltetrahydrofolate = N-formyl-L-methionyl-tRNA(fMet) + (6S)-5,6,7,8-tetrahydrofolate + H(+). Its function is as follows. Attaches a formyl group to the free amino group of methionyl-tRNA(fMet). The formyl group appears to play a dual role in the initiator identity of N-formylmethionyl-tRNA by promoting its recognition by IF2 and preventing the misappropriation of this tRNA by the elongation apparatus. In Listeria innocua serovar 6a (strain ATCC BAA-680 / CLIP 11262), this protein is Methionyl-tRNA formyltransferase.